Here is a 121-residue protein sequence, read N- to C-terminus: Large ribosomal subunit protein uL14 (121 aa).

Belongs to the universal ribosomal protein uL14 family. Part of the 50S ribosomal subunit. Forms a cluster with proteins L3 and L19. In the 70S ribosome, L14 and L19 interact and together make contacts with the 16S rRNA in bridges B5 and B8.

Its function is as follows. Binds to 23S rRNA. Forms part of two intersubunit bridges in the 70S ribosome. This is Large ribosomal subunit protein uL14 from Prochlorococcus marinus (strain SARG / CCMP1375 / SS120).